The sequence spans 593 residues: Aspartate--tRNA(Asp/Asn) ligase (593 aa).

Glu-176 is a binding site for L-aspartate. The interval 200-203 (QIFK) is aspartate. Arg-222 lines the L-aspartate pocket. ATP contacts are provided by residues 222-224 (RDE) and Gln-231. His-450 provides a ligand contact to L-aspartate. Glu-490 serves as a coordination point for ATP. Arg-497 contributes to the L-aspartate binding site. 542–545 (GLDR) lines the ATP pocket.

Belongs to the class-II aminoacyl-tRNA synthetase family. Type 1 subfamily. As to quaternary structure, homodimer.

The protein localises to the cytoplasm. It carries out the reaction tRNA(Asx) + L-aspartate + ATP = L-aspartyl-tRNA(Asx) + AMP + diphosphate. Aspartyl-tRNA synthetase with relaxed tRNA specificity since it is able to aspartylate not only its cognate tRNA(Asp) but also tRNA(Asn). Reaction proceeds in two steps: L-aspartate is first activated by ATP to form Asp-AMP and then transferred to the acceptor end of tRNA(Asp/Asn). This Symbiobacterium thermophilum (strain DSM 24528 / JCM 14929 / IAM 14863 / T) protein is Aspartate--tRNA(Asp/Asn) ligase.